Consider the following 392-residue polypeptide: Alkaline phosphatase L (392 aa).

Residues 1–23 form the signal peptide; it reads MYKRSLIAASLSVAALVSAQAMA.

Belongs to the PstS family. As to quaternary structure, homodimer.

The protein localises to the secreted. Its subcellular location is the periplasm. It carries out the reaction a phosphate monoester + H2O = an alcohol + phosphate. Functionally, has both a phosphomonoesterase and phosphodiesterase activity. In Pseudomonas aeruginosa, this protein is Alkaline phosphatase L.